A 344-amino-acid chain; its full sequence is Follistatin (344 aa).

The N-terminal stretch at 1–29 (MVRARHQPGGLCLLLLLLCQFMEDRSAQA) is a signal peptide. One can recognise a TB domain in the interval 30 to 103 (GNCWLRQAKN…TCENVDCGPG (74 aa)). Disulfide bonds link cysteine 32–cysteine 55, cysteine 42–cysteine 88, cysteine 56–cysteine 91, cysteine 95–cysteine 106, cysteine 100–cysteine 116, cysteine 118–cysteine 150, cysteine 122–cysteine 143, cysteine 132–cysteine 164, cysteine 168–cysteine 179, cysteine 173–cysteine 189, cysteine 192–cysteine 225, cysteine 196–cysteine 218, cysteine 207–cysteine 239, cysteine 245–cysteine 256, cysteine 250–cysteine 267, cysteine 270–cysteine 302, cysteine 274–cysteine 295, and cysteine 284–cysteine 316. The region spanning 94 to 117 (TCENVDCGPGKKCRMNKKNKPRCV) is the Follistatin-like 1 domain. The region spanning 112–166 (NKPRCVCAPDCSNITWKGPVCGLDGKTYRNECALLKARCKEQPELEVQYQGRCKK) is the Kazal-like 1 domain. A glycan (N-linked (GlcNAc...) asparagine) is linked at asparagine 124. In terms of domain architecture, Follistatin-like 2 spans 167 to 190 (TCRDVFCPGSSTCVVDQTNNAYCV). The Kazal-like 2 domain maps to 186 to 241 (NAYCVTCNRICPEPASSEQYLCGNDGVTYSSACHLRKATCLLGRSIGLAYEGKCIK). The 25-residue stretch at 244 to 268 (SCEDIQCTGGKKCLWDFKVGRGRCS) folds into the Follistatin-like 3 domain. The region spanning 264-318 (RGRCSLCDELCPDSKSDEPVCASDNATYASECAMKEAACSSGVLLEVKHSGSCNS) is the Kazal-like 3 domain. The N-linked (GlcNAc...) asparagine glycan is linked to asparagine 288. A disordered region spans residues 314-344 (GSCNSISEDTEEEEEDEDQDYSFPISSILEW). The segment covering 321–333 (EDTEEEEEDEDQD) has biased composition (acidic residues).

In terms of assembly, interacts with GDF11. Interacts with activin A/INHBA. Interacts with MYOSTATIN/MSTN. In terms of tissue distribution, isoform 1 is the predominant isoform in serum but is undetectable in follicular fluid. In the embryo, strong expression is seen in the palatal epithelia, including the medial edge epithelial and midline epithelial seam of the palatal shelves. Less pronounced expression is also seen throughout the palatal shelf and tongue mesenchyme.

Its subcellular location is the secreted. It localises to the nucleus. The protein localises to the nucleolus. In terms of biological role, multifunctional regulatory protein whose primary function is to antagonize members of the transforming growth factor beta (TGF-beta) superfamily including activin, myostatin, GDF11 or bone morphogenetic proteins (BMPs). Mechanistically, binds to these ligands in the extracellular space, blocking their type II receptor-binding site to inhibit downstream signaling. Plays an essential role in muscle fiber formation and growth both by preventing the repressive effects of myostatin and through SMAD3/AKT/mTOR signaling independently of myostatin. Also promotes neural differentiation by antagonizing the action BMP4. Acts as a specific inhibitor of the biosynthesis and secretion of pituitary follicle stimulating hormone (FSH) by sequestering activin A/INHBA. On the other hand, translocates into the nucleus where it down-regulates rRNA synthesis and ribosome biogenesis to maintain cellular energy homeostasis by binding to rDNA. The polypeptide is Follistatin (Homo sapiens (Human)).